The sequence spans 1024 residues: Beta-galactosidase (1024 aa).

The substrate site is built by Asn103 and Asp202. Position 202 (Asp202) interacts with Na(+). Residues Glu417, His419, and Glu462 each coordinate Mg(2+). Residues Glu462 and 538-541 (EYAH) each bind substrate. Glu462 functions as the Proton donor in the catalytic mechanism. The active-site Nucleophile is Glu538. Asn598 provides a ligand contact to Mg(2+). Na(+)-binding residues include Phe602 and Asn605. Residues Asn605 and Trp1000 each contribute to the substrate site.

It belongs to the glycosyl hydrolase 2 family. As to quaternary structure, homotetramer. It depends on Mg(2+) as a cofactor. Requires Na(+) as cofactor.

The catalysed reaction is Hydrolysis of terminal non-reducing beta-D-galactose residues in beta-D-galactosides.. This is Beta-galactosidase from Shigella dysenteriae serotype 1 (strain Sd197).